The sequence spans 186 residues: GTP cyclohydrolase 1 1 (186 aa).

The protein belongs to the GTP cyclohydrolase I family. Homomer.

It carries out the reaction GTP + H2O = 7,8-dihydroneopterin 3'-triphosphate + formate + H(+). The protein operates within cofactor biosynthesis; 7,8-dihydroneopterin triphosphate biosynthesis; 7,8-dihydroneopterin triphosphate from GTP: step 1/1. In Pseudomonas aeruginosa (strain ATCC 15692 / DSM 22644 / CIP 104116 / JCM 14847 / LMG 12228 / 1C / PRS 101 / PAO1), this protein is GTP cyclohydrolase 1 1 (folE1).